The chain runs to 143 residues: NADH-quinone oxidoreductase subunit A (143 aa).

A run of 3 helical transmembrane segments spans residues 7–27, 63–83, and 93–113; these read GFGNVFVFLALGIVFVAGGYL, FYVVALIFIIFDVEVVFLYPW, and FALFEALVFAGILILGLAYAW.

The protein belongs to the complex I subunit 3 family. As to quaternary structure, NDH-1 is composed of 14 different subunits. Subunits NuoA, H, J, K, L, M, N constitute the membrane sector of the complex.

Its subcellular location is the cell inner membrane. The enzyme catalyses a quinone + NADH + 5 H(+)(in) = a quinol + NAD(+) + 4 H(+)(out). Functionally, NDH-1 shuttles electrons from NADH, via FMN and iron-sulfur (Fe-S) centers, to quinones in the respiratory chain. The immediate electron acceptor for the enzyme in this species is believed to be a menaquinone. Couples the redox reaction to proton translocation (for every two electrons transferred, four hydrogen ions are translocated across the cytoplasmic membrane), and thus conserves the redox energy in a proton gradient. This chain is NADH-quinone oxidoreductase subunit A, found in Chlorobium limicola (strain DSM 245 / NBRC 103803 / 6330).